The sequence spans 488 residues: Ammonium transporter Rh type C-like 2 (488 aa).

Residues 1 to 21 (MGNCFGSRGICDRPKNTNIRL) lie on the Cytoplasmic side of the membrane. Residues 22-42 (SLPAVCFVWQVSMIILFGVFV) traverse the membrane as a helical segment. Topologically, residues 43-73 (RYNEEADTNWVYTKKEKNITSDIENDFYFRY) are extracellular. An N-linked (GlcNAc...) asparagine glycan is attached at Asn-60. The helical transmembrane segment at 74 to 94 (PSFQDVHVMIFVGFGFLMTFL) threads the bilayer. The Cytoplasmic portion of the chain corresponds to 95–98 (KRYS). A helical membrane pass occupies residues 99–119 (FGAVGFNFLIAAFGLQWALLM). At 120-139 (QGWFSPLGDDGKIKIGIENL) the chain is on the extracellular side. A helical membrane pass occupies residues 140 to 160 (INADFCVASCLIAYGAVLGKV). At 161 to 162 (SP) the chain is on the cytoplasmic side. A helical membrane pass occupies residues 163 to 183 (VQLLVMTLFGITLYAVEEFII). The Extracellular portion of the chain corresponds to 184–191 (LRVLNAKD). A helical membrane pass occupies residues 192-214 (AGGSMVIHTFGAYYGLSISRVLY). Residues 215 to 232 (RPNLNKSKHMNGSVYHSD) lie on the Cytoplasmic side of the membrane. A helical membrane pass occupies residues 233 to 253 (VFAMIGTLFLWMFWPSFNSAI). Topologically, residues 254-264 (CNHGDGQHRAA) are extracellular. The helical transmembrane segment at 265–285 (INTYLALASTVLTTVAISSMF) threads the bilayer. Over 286–298 (EKTGKLDMVHIQN) the chain is Cytoplasmic. Residues 299–319 (STLAGGVAVGTAAEFMLMPYG) traverse the membrane as a helical segment. Residue Ser-320 is a topological domain, extracellular. Residues 321–341 (LIVGFFCGIISTLGYIYLTPF) traverse the membrane as a helical segment. Residues 342–356 (LEERLKIQDTCGIHN) are Cytoplasmic-facing. The helical transmembrane segment at 357–377 (LHAMPGVIGGIVGAISAAAAS) threads the bilayer. The Extracellular segment spans residues 378 to 409 (KEVYGDLGLKNIFSIEGSNVTRLPTVQGGYQA). The chain crosses the membrane as a helical span at residues 410–430 (AALCVALCFGIGGGTFVGLVL). Residues 431-488 (KLPIWGDPADEHCFNDEMYWEVPEDEESIIPPVLSYNNHMIPNNKHEEMRETNFAEQS) are Cytoplasmic-facing.

Belongs to the ammonium transporter (TC 2.A.49) family. Rh subfamily. In terms of assembly, homotrimer. At larval stages, expressed only in the yolk sac and gill. However, the kidney and the gills are major sites of expression in adults.

It is found in the apical cell membrane. Its function is as follows. Functions as an ammonia transporter. May play a role in the elimination of ammonia in the gill. The protein is Ammonium transporter Rh type C-like 2 (rhcgl2) of Danio rerio (Zebrafish).